Reading from the N-terminus, the 334-residue chain is Protein U17/U16 (334 aa).

This sequence belongs to the herpesviridae US22 family. Isoform 1 is not glycosylated.

Functionally, isoform 3 can transactivate the human immunodeficiency virus type 1 promoter. The sequence is that of Protein U17/U16 (U17/U16) from Homo sapiens (Human).